The sequence spans 229 residues: uncharacterized protein (229 aa).

An HTH cro/C1-type domain is found at 24 to 78; sequence LRKWRSIFNASQSDLARKLGISPSVISDYESGRRKPGTAFLKKFVCALIELDGER. A DNA-binding region (H-T-H motif) is located at residues 35–54; that stretch reads QSDLARKLGISPSVISDYES.

This is an uncharacterized protein from Archaeoglobus fulgidus (strain ATCC 49558 / DSM 4304 / JCM 9628 / NBRC 100126 / VC-16).